The sequence spans 78 residues: UPF0401 protein YubL (78 aa).

This sequence belongs to the UPF0401 family.

In Salmonella typhi, this protein is UPF0401 protein YubL (yubL).